A 181-amino-acid polypeptide reads, in one-letter code: dTDP-4-dehydrorhamnose 3,5-epimerase (181 aa).

Substrate-binding positions include R23, E28, 47-49 (QDN), and R59. H62 acts as the Proton acceptor in catalysis. The substrate site is built by K72 and H119. Catalysis depends on Y132, which acts as the Proton donor. Substrate is bound by residues E143 and K167.

It belongs to the dTDP-4-dehydrorhamnose 3,5-epimerase family. In terms of assembly, homodimer.

The catalysed reaction is dTDP-4-dehydro-6-deoxy-alpha-D-glucose = dTDP-4-dehydro-beta-L-rhamnose. It participates in carbohydrate biosynthesis; dTDP-L-rhamnose biosynthesis. Its pathway is bacterial outer membrane biogenesis; LPS O-antigen biosynthesis. Catalyzes the epimerization of the C3' and C5'positions of dTDP-6-deoxy-D-xylo-4-hexulose, forming dTDP-6-deoxy-L-lyxo-4-hexulose. The polypeptide is dTDP-4-dehydrorhamnose 3,5-epimerase (rfbC) (Shigella flexneri).